The sequence spans 451 residues: MASATEDPVLERYFKGHKAAITSLDLSPNGKQLATASWDTFLMLWNFKPHARAYRYVGHKDVVTSVQFSPHGNLLASASRDRTVRLWIPDKRGKFSEFKAHTAPVRSVDFSADGQFLATASEDKSIKVWSMYRQRFLYSLYRHTHWVRCAKFSPDGRLIVSCSEDKTIKIWDTTNKQCVNNFSDSVGFANFVDFNPSGTCIASAGSDQTVKVWDVRVNKLLQHYQVHSGGVNCISFHPSDNYLVTASSDGTLKILDLLEGRLIYTLQGHTGPVFTVSFSKGGELFASGGADTQVLLWRTNFDELHCKGLNKRNLKRLHFDSPPHLLDIYPRTPHPHEEKVETVETTETSGRTLPDKGEEACGYFLNPSLMSPECSPTTTKKKTEDMSDLPSESQRSIPLAVTDALEHIMEQLNVLTQTVSILEQRLTLTEDKLKDCLENQQKLFSAVQQKS.

7 WD repeats span residues glycine 16 to arginine 55, glycine 58 to lysine 99, histidine 101 to serine 139, arginine 142 to asparagine 181, serine 183 to histidine 223, valine 226 to threonine 265, and glycine 268 to lysine 307. Serine 321 carries the phosphoserine modification. A disordered region spans residues proline 372–glutamine 394. Residues alanine 404–leucine 443 are a coiled coil.

It belongs to the WD repeat POC1 family. As to quaternary structure, interacts with POC1A. Interacts with FAM161A. Interacts with CEP44; the interaction is direct and recruits POC1B to centriolar microtubules. Forms a microtubule-associated complex with POC5, CETN2 and FAM161A. Interacts with CCDC15. Phosphorylated in mitotic cells that may be mediated by CDK1.

It localises to the cytoplasm. The protein localises to the cytoskeleton. It is found in the microtubule organizing center. The protein resides in the centrosome. Its subcellular location is the centriole. It localises to the cilium basal body. The protein localises to the spindle pole. Plays an important role in centriole assembly and/or stability and ciliogenesis. Involved in early steps of centriole duplication, as well as in the later steps of centriole length control. Acts in concert with POC1A to ensure centriole integrity and proper mitotic spindle formation. Required for primary cilia formation, ciliary length and also cell proliferation. Required for retinal integrity. Acts as a positive regulator of centriole elongation. This is POC1 centriolar protein homolog B (POC1B) from Pongo abelii (Sumatran orangutan).